The sequence spans 513 residues: uncharacterized protein (513 aa).

Transmembrane regions (helical) follow at residues 3-23 (MTAF…TYFA), 47-67 (LAIA…GMIA), 71-91 (FDGF…LYIV), 129-149 (TFYM…LLGL), 153-173 (AAVL…GMIA), 177-197 (VQII…IIVF), 233-253 (ETLS…HILI), 273-293 (WIIG…AAFV), 320-340 (FLFA…VTGL), 374-394 (ASVA…SLNV), 395-415 (AFLV…LIVF), 424-444 (ASGA…LVSM), and 462-482 (LIPL…GAWL).

It belongs to the sodium:solute symporter (SSF) (TC 2.A.21) family.

The protein resides in the cell membrane. This is an uncharacterized protein from Bacillus subtilis (strain 168).